The chain runs to 452 residues: 3-phosphoshikimate 1-carboxyvinyltransferase (452 aa).

Residues 1-17 (MSHAAAAKPATARKSQA) show a composition bias toward low complexity. Residues 1–26 (MSHAAAAKPATARKSQALSGTARVPG) are disordered. 3-phosphoshikimate contacts are provided by lysine 28, serine 29, and arginine 33. Lysine 28 is a phosphoenolpyruvate binding site. The phosphoenolpyruvate site is built by glycine 100 and arginine 128. The 3-phosphoshikimate site is built by serine 174, glutamine 176, aspartate 327, and lysine 354. Glutamine 176 contributes to the phosphoenolpyruvate binding site. Catalysis depends on aspartate 327, which acts as the Proton acceptor. Arginine 358 and arginine 409 together coordinate phosphoenolpyruvate.

The protein belongs to the EPSP synthase family. As to quaternary structure, monomer.

It is found in the cytoplasm. It carries out the reaction 3-phosphoshikimate + phosphoenolpyruvate = 5-O-(1-carboxyvinyl)-3-phosphoshikimate + phosphate. Its pathway is metabolic intermediate biosynthesis; chorismate biosynthesis; chorismate from D-erythrose 4-phosphate and phosphoenolpyruvate: step 6/7. Catalyzes the transfer of the enolpyruvyl moiety of phosphoenolpyruvate (PEP) to the 5-hydroxyl of shikimate-3-phosphate (S3P) to produce enolpyruvyl shikimate-3-phosphate and inorganic phosphate. In Mesorhizobium japonicum (strain LMG 29417 / CECT 9101 / MAFF 303099) (Mesorhizobium loti (strain MAFF 303099)), this protein is 3-phosphoshikimate 1-carboxyvinyltransferase.